The following is a 392-amino-acid chain: Cell division protein FtsZ (392 aa).

GTP-binding positions include 24-28, 111-113, Glu-142, Arg-145, and Asp-189; these read GGGCN and GTG.

This sequence belongs to the FtsZ family. In terms of assembly, homodimer. Polymerizes to form a dynamic ring structure in a strictly GTP-dependent manner. Interacts directly with several other division proteins.

It is found in the cytoplasm. Its function is as follows. Essential cell division protein that forms a contractile ring structure (Z ring) at the future cell division site. The regulation of the ring assembly controls the timing and the location of cell division. One of the functions of the FtsZ ring is to recruit other cell division proteins to the septum to produce a new cell wall between the dividing cells. Binds GTP and shows GTPase activity. The sequence is that of Cell division protein FtsZ from Neisseria meningitidis serogroup A / serotype 4A (strain DSM 15465 / Z2491).